The primary structure comprises 725 residues: Exocyst complex component 8 (725 aa).

Ser-19 carries the phosphoserine modification. The segment at 116–159 (AASGGEEGGGGAGGRDQLRGQTGFFPSPGGASRDGSGPGEEGKQ) is disordered. Residues 120–129 (GEEGGGGAGG) are compositionally biased toward gly residues. In terms of domain architecture, PH spans 182–282 (YLVYNGDLVE…WLEVLEETKR (101 aa)). The tract at residues 285–322 (SEKRRREQEEAAAPRGPPQVTPKASNPFEDEDDDEPTV) is disordered. Residues 312 to 322 (FEDEDDDEPTV) are compositionally biased toward acidic residues.

The protein belongs to the EXO84 family. As to quaternary structure, the exocyst complex is composed of EXOC1, EXOC2, EXOC3, EXOC4, EXOC5, EXOC6, EXOC7 and EXOC8. Interacts (via PH domain) with GTP-bound RALA and RALB. Interacts with SH3BP1; required for the localization of both SH3BP1 and the exocyst to the leading edge of migrating cells.

The protein resides in the cytoplasm. It is found in the perinuclear region. It localises to the cell projection. The protein localises to the growth cone. In terms of biological role, component of the exocyst complex involved in the docking of exocytic vesicles with fusion sites on the plasma membrane. This is Exocyst complex component 8 (EXOC8) from Bos taurus (Bovine).